A 96-amino-acid polypeptide reads, in one-letter code: Ferredoxin-1 (96 aa).

Residues 1–95 form the 2Fe-2S ferredoxin-type domain; that stretch reads MKVIINGKEF…DCDEIVIESE (95 aa). Cys-34, Cys-39, Cys-42, and Cys-78 together coordinate [2Fe-2S] cluster. Cysteines 52 and 87 form a disulfide.

Belongs to the 2Fe2S plant-type ferredoxin family. [2Fe-2S] cluster serves as cofactor.

Ferredoxins are iron-sulfur proteins that transfer electrons in a wide variety of metabolic reactions. The protein is Ferredoxin-1 (fdx1) of Aquifex aeolicus (strain VF5).